The sequence spans 69 residues: MPSVIFGLLALAIGLLGLTAWWWSVTEFLRGAVPVALIIFGLVALAAGVQSVRVPPAGKRANSDPNIDG.

The Cytoplasmic portion of the chain corresponds to 1–2 (MP). Residues 3-23 (SVIFGLLALAIGLLGLTAWWW) traverse the membrane as a helical segment. Residues 24–31 (SVTEFLRG) lie on the Lumenal side of the membrane. Residues 32–52 (AVPVALIIFGLVALAAGVQSV) form a helical membrane-spanning segment. The Cytoplasmic portion of the chain corresponds to 53–69 (RVPPAGKRANSDPNIDG).

Belongs to the magnetosome MamI protein family.

The protein localises to the magnetosome membrane. Its function is as follows. May be involved in an early stage of magnetosome nucleation. Not essential for formation of magnetosome membrane vesicles, it is probably functionally redundant with other proteins. May bind magnetite. One of 7 genes (mamLQBIEMO) able to induce magnetosome membrane biogenesis; coexpression of mamLQRBIEMO in a deletion of the 17 gene mamAB operon restores magnetosome vesicle formation but not magnetite biosynthesis. The protein is Magnetosome protein MamI of Magnetospirillum gryphiswaldense (strain DSM 6361 / JCM 21280 / NBRC 15271 / MSR-1).